A 1486-amino-acid polypeptide reads, in one-letter code: Protein PRRC2B (1486 aa).

5 disordered regions span residues 1–20 (MSDR…KYST), 39–306 (VIPR…FPLP), 320–341 (QMND…PLRQ), 385–519 (KFSD…AREE), and 531–658 (LDQK…EQLY). The segment covering 88 to 137 (ANKQDQQDPKSSSVTASQPPESQPQPGLQKSVSNLQKPTQSISQENTNSV) has biased composition (polar residues). Residues S166, S168, S222, and S226 each carry the phosphoserine modification. A compositionally biased stretch (polar residues) spans 219–235 (SAASLSASPTELGSRNA). T228 is modified (phosphothreonine). K251 is covalently cross-linked (Glycyl lysine isopeptide (Lys-Gly) (interchain with G-Cter in SUMO2)). Positions 288–300 (SPQSSENQTTVER) are enriched in polar residues. Residues S387 and S415 each carry the phosphoserine modification. 3 stretches are compositionally biased toward basic and acidic residues: residues 422–433 (TDAKRTQEEGKD), 478–488 (HSAEDKEDKPP), and 501–519 (AVER…AREE). S479 carries the phosphoserine modification. Residues 494 to 544 (IQSEMSEAVERARKRREEEERRAREERLAACAAKLKQLDQKCRQAQKANET) adopt a coiled-coil conformation. Phosphoserine is present on S555. The span at 600 to 611 (SNSSSSSSSSSS) shows a compositional bias: low complexity. Position 621 is a phosphoserine (S621). Residues 638-656 (QRQQQQQQQQQQQQQQQEQ) are compositionally biased toward low complexity. A Glycyl lysine isopeptide (Lys-Gly) (interchain with G-Cter in SUMO2) cross-link involves residue K751. The residue at position 753 (T753) is a Phosphothreonine. Residues S762 and S793 each carry the phosphoserine modification. Disordered stretches follow at residues 792–847 (RSPD…EARK), 893–918 (EERR…IPPR), and 950–1080 (ALPV…PGAV). Residues 880 to 904 (IEVLTKKQRRLLEEERRKKEQAAQV) are a coiled coil. Polar residues predominate over residues 960–986 (SWRTAVTAFSSTEPGTSEQGFKSSQGD). Residues 998–1007 (SSATSSQRSS) are compositionally biased toward low complexity. Composition is skewed to basic and acidic residues over residues 1025 to 1055 (SKAD…EHRP) and 1062 to 1074 (RSLK…EGAE). Residues S1070 and S1159 each carry the phosphoserine modification. Disordered regions lie at residues 1177–1205 (KAWE…SSVG), 1410–1443 (QSIQ…TSRE), and 1455–1486 (ADSK…AWEP). Residues 1181–1191 (NSPSLPEQSSP) show a composition bias toward polar residues. A compositionally biased stretch (low complexity) spans 1410 to 1421 (QSIQLPPGQSLS). Polar residues predominate over residues 1457–1474 (SKQNVPTGGSAPSPQAYR).

In Mus musculus (Mouse), this protein is Protein PRRC2B (Prrc2b).